The following is a 149-amino-acid chain: Deoxyuridine 5'-triphosphate nucleotidohydrolase (149 aa).

Substrate contacts are provided by residues 66–68 (RSG), Asn-79, 83–85 (TID), and Lys-93.

Belongs to the dUTPase family. Requires Mg(2+) as cofactor.

The catalysed reaction is dUTP + H2O = dUMP + diphosphate + H(+). The protein operates within pyrimidine metabolism; dUMP biosynthesis; dUMP from dCTP (dUTP route): step 2/2. This enzyme is involved in nucleotide metabolism: it produces dUMP, the immediate precursor of thymidine nucleotides and it decreases the intracellular concentration of dUTP so that uracil cannot be incorporated into DNA. This chain is Deoxyuridine 5'-triphosphate nucleotidohydrolase, found in Corynebacterium glutamicum (strain ATCC 13032 / DSM 20300 / JCM 1318 / BCRC 11384 / CCUG 27702 / LMG 3730 / NBRC 12168 / NCIMB 10025 / NRRL B-2784 / 534).